Reading from the N-terminus, the 271-residue chain is MVTRLSASDASFYQLENTATPMYVGLLLILRRPRAGLSYEALLETVEQRLPQIPRYRQKVQEVKLGLARPVWIDDRDFDITYHVRRSALPSPGSDEQLHELIARLAARPLDKSRPLWEMYLVEGLEKNRIALYTKSHQALINGVTALAIGHVIADRTRRPPAFPEDIWVPERDPGTTRLLLRAVGDWLVRPGAQLQAVGSAVAGLVTNSGQLVETGRKVLDIARTVARGTAPSSPLNATVSRNRRFTVARASLDDYRTVRARYDCDSTTWC.

The protein belongs to the long-chain O-acyltransferase family.

It carries out the reaction an acyl-CoA + a 1,2-diacyl-sn-glycerol = a triacyl-sn-glycerol + CoA. It functions in the pathway glycerolipid metabolism; triacylglycerol biosynthesis. Its function is as follows. Catalyzes the terminal and only committed step in triacylglycerol synthesis by using diacylglycerol and fatty acyl CoA as substrates. Required for storage lipid synthesis. The protein is Probable diacyglycerol O-acyltransferase tgs3 (tgs3) of Mycobacterium tuberculosis (strain CDC 1551 / Oshkosh).